We begin with the raw amino-acid sequence, 100 residues long: Urease subunit gamma (100 aa).

Belongs to the urease gamma subunit family. Heterotrimer of UreA (gamma), UreB (beta) and UreC (alpha) subunits. Three heterotrimers associate to form the active enzyme.

It is found in the cytoplasm. It catalyses the reaction urea + 2 H2O + H(+) = hydrogencarbonate + 2 NH4(+). The protein operates within nitrogen metabolism; urea degradation; CO(2) and NH(3) from urea (urease route): step 1/1. The protein is Urease subunit gamma of Cyanothece sp. (strain PCC 7425 / ATCC 29141).